The sequence spans 244 residues: Methylthioribulose-1-phosphate dehydratase (244 aa).

A substrate-binding site is contributed by C89. 2 residues coordinate Zn(2+): H107 and H109. E130 serves as the catalytic Proton donor/acceptor. H192 serves as a coordination point for Zn(2+).

It belongs to the aldolase class II family. MtnB subfamily. Requires Zn(2+) as cofactor.

It localises to the cytoplasm. The catalysed reaction is 5-(methylsulfanyl)-D-ribulose 1-phosphate = 5-methylsulfanyl-2,3-dioxopentyl phosphate + H2O. Its pathway is amino-acid biosynthesis; L-methionine biosynthesis via salvage pathway; L-methionine from S-methyl-5-thio-alpha-D-ribose 1-phosphate: step 2/6. In terms of biological role, catalyzes the dehydration of methylthioribulose-1-phosphate (MTRu-1-P) into 2,3-diketo-5-methylthiopentyl-1-phosphate (DK-MTP-1-P). The protein is Methylthioribulose-1-phosphate dehydratase of Saccharomyces cerevisiae (strain ATCC 204508 / S288c) (Baker's yeast).